We begin with the raw amino-acid sequence, 805 residues long: Phenylalanine--tRNA ligase beta subunit (805 aa).

In terms of domain architecture, tRNA-binding spans 39–148 (APPFTGVVVT…AALRPGTDIR (110 aa)). In terms of domain architecture, B5 spans 399–474 (PVREPVRMRL…RVYGFERIPD (76 aa)). Positions 452, 458, 461, and 462 each coordinate Mg(2+). In terms of domain architecture, FDX-ACB spans 703-804 (SRQPVVVRDL…LVAAHNARQR (102 aa)).

Belongs to the phenylalanyl-tRNA synthetase beta subunit family. Type 1 subfamily. Tetramer of two alpha and two beta subunits. It depends on Mg(2+) as a cofactor.

The protein resides in the cytoplasm. The catalysed reaction is tRNA(Phe) + L-phenylalanine + ATP = L-phenylalanyl-tRNA(Phe) + AMP + diphosphate + H(+). This chain is Phenylalanine--tRNA ligase beta subunit, found in Bordetella pertussis (strain Tohama I / ATCC BAA-589 / NCTC 13251).